Reading from the N-terminus, the 545-residue chain is Capsular polysaccharide phosphotransferase SacB (545 aa).

The protein belongs to the stealth family.

May be the polymerase that links individual UDP-N-acetyl-D-mannosamine monomers. In serotype A the capsule is composed of repeated units of (alpha 1-6)-linked N-acetyl-D-mannosamine-1-phosphate. The chain is Capsular polysaccharide phosphotransferase SacB (sacB) from Neisseria meningitidis serogroup A.